The chain runs to 624 residues: LRR receptor kinase BAK1 (624 aa).

A signal peptide spans Met-1–Ala-25. Residues Asn-26–Gly-237 are Extracellular-facing. 4 LRR repeats span residues Leu-91–Leu-115, Asn-117–Leu-139, Leu-140–Ile-163, and Thr-164–Leu-188. Residues Asn-103, Asn-114, Asn-127, Asn-149, and Asn-175 are each glycosylated (N-linked (GlcNAc...) asparagine). The interval Thr-205–Thr-236 is disordered. Pro residues predominate over residues Pro-210 to Val-227. The chain crosses the membrane as a helical span at residues Ala-238–Phe-258. The Cytoplasmic portion of the chain corresponds to Ala-259–Arg-624. The 288-residue stretch at Phe-301–Gln-588 folds into the Protein kinase domain. Residues Leu-307–Val-315 and Lys-329 each bind ATP. The active-site Proton acceptor is the Asp-428.

The protein belongs to the protein kinase superfamily. Ser/Thr protein kinase family. As to quaternary structure, forms homodimers. Interacts with BRI1. Interacts with REM4.1.

The protein resides in the cell membrane. The catalysed reaction is L-seryl-[protein] + ATP = O-phospho-L-seryl-[protein] + ADP + H(+). It catalyses the reaction L-threonyl-[protein] + ATP = O-phospho-L-threonyl-[protein] + ADP + H(+). Its function is as follows. LRR receptor kinase involved in defense response. Does not seem to be required specifically for XA21-mediated immunity or basal resistance to Xanthomonas oryzae pv. oryzae (Xoo), or immunity to Magnaporthe oryzae. Involved in brassinosteroid (BR) signaling pathway. Acts as a coreceptor of BRI1. Forms at the plasma membrane a receptor complex with BRI1 which is activated in response to brassinolide. Phosphorylates BRI1. Required for normal plant growth and leaf development. Possesses kinase activity in vitro. The chain is LRR receptor kinase BAK1 from Oryza sativa subsp. indica (Rice).